The sequence spans 307 residues: N-acetylmuramic acid 6-phosphate etherase (307 aa).

Residues 59–222 (TADRLRQGGR…STGVMVKLGK (164 aa)) form the SIS domain. Glutamate 87 (proton donor) is an active-site residue. Residue glutamate 118 is part of the active site.

This sequence belongs to the GCKR-like family. MurNAc-6-P etherase subfamily. As to quaternary structure, homodimer.

It catalyses the reaction N-acetyl-D-muramate 6-phosphate + H2O = N-acetyl-D-glucosamine 6-phosphate + (R)-lactate. It functions in the pathway amino-sugar metabolism; N-acetylmuramate degradation. Specifically catalyzes the cleavage of the D-lactyl ether substituent of MurNAc 6-phosphate, producing GlcNAc 6-phosphate and D-lactate. The sequence is that of N-acetylmuramic acid 6-phosphate etherase from Nostoc sp. (strain PCC 7120 / SAG 25.82 / UTEX 2576).